The following is a 95-amino-acid chain: Co-chaperonin GroES (95 aa).

The protein belongs to the GroES chaperonin family. In terms of assembly, heptamer of 7 subunits arranged in a ring. Interacts with the chaperonin GroEL.

It localises to the cytoplasm. Its function is as follows. Together with the chaperonin GroEL, plays an essential role in assisting protein folding. The GroEL-GroES system forms a nano-cage that allows encapsulation of the non-native substrate proteins and provides a physical environment optimized to promote and accelerate protein folding. GroES binds to the apical surface of the GroEL ring, thereby capping the opening of the GroEL channel. This is Co-chaperonin GroES from Clostridium acetobutylicum (strain ATCC 824 / DSM 792 / JCM 1419 / IAM 19013 / LMG 5710 / NBRC 13948 / NRRL B-527 / VKM B-1787 / 2291 / W).